A 97-amino-acid chain; its full sequence is uncharacterized protein (97 aa).

Residues 72–97 (TVERKRSEHTNSRKKDPSAYTWSDVK) are disordered. Residues 73 to 88 (VERKRSEHTNSRKKDP) are compositionally biased toward basic and acidic residues.

It belongs to the chlamydial CPn_0121/CT_031/TC_0300 family.

This is an uncharacterized protein from Chlamydia pneumoniae (Chlamydophila pneumoniae).